The chain runs to 926 residues: Ubiquitin carboxyl-terminal hydrolase 4 (926 aa).

Residues 205 to 328 enclose the Rhodanese domain; the sequence is SQMEILLIDI…WLKSNYGSQV (124 aa). Ser443 carries the phosphoserine modification. The 362-residue stretch at 562–923 folds into the USP domain; that stretch reads VGLENLGNSC…NAYVLFYHRV (362 aa). Cys571 (nucleophile) is an active-site residue. His880 acts as the Proton acceptor in catalysis.

Belongs to the peptidase C19 family. Interacts with BRO1, RFU1 and VPS32. Associates with the 26S proteasome.

The protein localises to the cytoplasm. Its subcellular location is the late endosome membrane. The catalysed reaction is Thiol-dependent hydrolysis of ester, thioester, amide, peptide and isopeptide bonds formed by the C-terminal Gly of ubiquitin (a 76-residue protein attached to proteins as an intracellular targeting signal).. Its activity is regulated as follows. RFU1 is an inhibitor of deubiquitination activity. Functionally, ubiquitin thioesterase that acts at the late endosome/prevacuolar compartment to recover ubiquitin from ubiquitinated membrane proteins en route to the vacuole. Also removes ubiquitin from soluble proteins targeted to proteasomes. Is essential to maintain a normal level of free ubiquitin. Involved in the ammonium-induced down-regulation of the GAP1 permease and the UME3 destruction in response to oxidative stress. Has a role in the RAD9 checkpoint response to TOP1 poisons. Required for promoting coordination of DNA replication and avoids DNA overreplication. In Saccharomyces cerevisiae (strain YJM789) (Baker's yeast), this protein is Ubiquitin carboxyl-terminal hydrolase 4 (DOA4).